The sequence spans 410 residues: Aminopeptidase AmpS (410 aa).

Positions 250, 316, 340, 345, 378, and 380 each coordinate a divalent metal cation.

Belongs to the peptidase M29 family. Co(2+) is required as a cofactor. Zn(2+) serves as cofactor. The cofactor is Mg(2+).

Functionally, metal-dependent exopeptidase. In Bacillus subtilis (strain 168), this protein is Aminopeptidase AmpS (ampS).